The sequence spans 137 residues: Small ribosomal subunit protein eS6 (137 aa).

A compositionally biased stretch (acidic residues) spans 114–127; sequence LPVEEAPAEDAPES. Positions 114–137 are disordered; sequence LPVEEAPAEDAPESAEEKSEDKKE. The segment covering 128–137 has biased composition (basic and acidic residues); sequence AEEKSEDKKE.

Belongs to the eukaryotic ribosomal protein eS6 family.

The polypeptide is Small ribosomal subunit protein eS6 (Nitrosopumilus maritimus (strain SCM1)).